A 198-amino-acid chain; its full sequence is MFSDRFEQLVQALRILPSVGPKSAQRMALHLLMKNREGAFGLAHALHEASSHIHECKICHSLTENEICDICLSNDRDQHLLCVVESPADVMAIEQSGSFRGKYHVLGGHLSPLDGIGPEEIGIPYLIQRLSSGEIEEVILATNATVEGQATAHYLLEATKHLPVHMTRIAQGVPQGGELEYVDSHTLSQAVHNRMKMK.

The C4-type zinc-finger motif lies at 56 to 71; it reads CKICHSLTENEICDIC. The Toprim domain occupies 79–174; it reads HLLCVVESPA…HMTRIAQGVP (96 aa).

The protein belongs to the RecR family.

Functionally, may play a role in DNA repair. It seems to be involved in an RecBC-independent recombinational process of DNA repair. It may act with RecF and RecO. The polypeptide is Recombination protein RecR (Acinetobacter baylyi (strain ATCC 33305 / BD413 / ADP1)).